A 1332-amino-acid chain; its full sequence is Abscisic-aldehyde oxidase (1332 aa).

One can recognise a 2Fe-2S ferredoxin-type domain in the interval 1–88; it reads MDLEFAVNGE…GCSITTSEGL (88 aa). Positions 40, 45, and 48 each coordinate [2Fe-2S] cluster. In terms of domain architecture, FAD-binding PCMH-type spans 219-400; it reads SDHLKYRWTT…LKVEIPSWTA (182 aa).

It belongs to the xanthine dehydrogenase family. As to quaternary structure, aldehyde oxidases (AO) are homodimers and heterodimers of AO subunits. AO-delta is a AAO3 homodimer. AAO3 also forms a dimer with AAO2. Interacts with PUB44, and this interaction probably results in targeting of this protein to the proteasome. The cofactor is [2Fe-2S] cluster. FAD serves as cofactor. Requires Mo-molybdopterin as cofactor. In terms of tissue distribution, expressed in vascular tissues of all organs, particularly in phloem companion cells and xylem parenchymatic cells. Highly expressed in roots and rosettes, and to lower extent in seedlings, stems and flowers. Expressed at very low levels in siliques and dry seeds. Also detected in root dividing cells (tips and primordia), in mesophyll cells and inside the guard cells.

It is found in the cytoplasm. It carries out the reaction 2-cis-(+)-abscisic aldehyde + O2 + H2O = 2-cis-(+)-abscisate + H2O2 + H(+). The enzyme catalyses 1-naphthaldehyde + O2 + H2O = 1-naphthoate + H2O2 + H(+). It catalyses the reaction indole-3-acetaldehyde + O2 + H2O = (indol-3-yl)acetate + H2O2 + H(+). Functionally, in higher plants aldehyde oxidases (AO) appear to be homo- and heterodimeric assemblies of AO subunits with probably different physiological functions. AO-delta may be involved in the last step of abscisic acid biosynthesis, at least in leaves and seeds. In vitro, AO-delta oxidizes abscisic aldehyde to abscisic acid (ABA). In vitro, AO-delta also uses 1-naphthaldehyde, indole-3-aldehyde (IAld), benzaldehyde and cinnamaldehyde as substrate; the AAO2-AAO3 dimer also uses abscisic aldehyde as substrate. The sequence is that of Abscisic-aldehyde oxidase (AAO3) from Arabidopsis thaliana (Mouse-ear cress).